Reading from the N-terminus, the 390-residue chain is Formate-dependent phosphoribosylglycinamide formyltransferase (390 aa).

Residues 14–15 and Glu74 contribute to the N(1)-(5-phospho-beta-D-ribosyl)glycinamide site; that span reads EL. ATP contacts are provided by residues Arg106, Lys147, 152–157, 187–190, and Glu195; these read SSGKGQ and EQFI. In terms of domain architecture, ATP-grasp spans 111 to 304; that stretch reads DLAAQELGIT…EFDLHARAIM (194 aa). Residues Glu263 and Glu275 each coordinate Mg(2+). N(1)-(5-phospho-beta-D-ribosyl)glycinamide is bound by residues Asp282, Lys351, and 358-359; that span reads RR.

It belongs to the PurK/PurT family. As to quaternary structure, homodimer.

It carries out the reaction N(1)-(5-phospho-beta-D-ribosyl)glycinamide + formate + ATP = N(2)-formyl-N(1)-(5-phospho-beta-D-ribosyl)glycinamide + ADP + phosphate + H(+). Its pathway is purine metabolism; IMP biosynthesis via de novo pathway; N(2)-formyl-N(1)-(5-phospho-D-ribosyl)glycinamide from N(1)-(5-phospho-D-ribosyl)glycinamide (formate route): step 1/1. Functionally, involved in the de novo purine biosynthesis. Catalyzes the transfer of formate to 5-phospho-ribosyl-glycinamide (GAR), producing 5-phospho-ribosyl-N-formylglycinamide (FGAR). Formate is provided by PurU via hydrolysis of 10-formyl-tetrahydrofolate. The polypeptide is Formate-dependent phosphoribosylglycinamide formyltransferase (Erythrobacter litoralis (strain HTCC2594)).